Here is a 78-residue protein sequence, read N- to C-terminus: Pigment-dispersing hormone 1 peptides (78 aa).

An N-terminal signal peptide occupies residues 1–22 (MRSSVIVAVLVVVALAALLTQG). An Alanine amide modification is found at Ala-75.

This sequence belongs to the arthropod PDH family. In terms of tissue distribution, eyestalk sinus gland.

It localises to the secreted. In terms of biological role, the pigment-dispersing hormone causes the migration of the distal retinal pigment into the proximal end of the pigment chromatophore cells and thus decreases the amount of light entering the retinulas. May also function as a neurotransmitter and/or neuromodulator. The protein is Pigment-dispersing hormone 1 peptides (PDH1) of Callinectes sapidus (Blue crab).